The primary structure comprises 308 residues: Acetaldehyde dehydrogenase 1 (308 aa).

10-13 (SGNI) provides a ligand contact to NAD(+). Residue Cys128 is the Acyl-thioester intermediate of the active site. Residues 159 to 167 (SAGPGTRAN) and Asn285 each bind NAD(+).

The protein belongs to the acetaldehyde dehydrogenase family.

The enzyme catalyses acetaldehyde + NAD(+) + CoA = acetyl-CoA + NADH + H(+). The polypeptide is Acetaldehyde dehydrogenase 1 (Salinispora arenicola (strain CNS-205)).